The sequence spans 262 residues: Type III pantothenate kinase (262 aa).

Residue 9–16 (DAGNSRIK) participates in ATP binding. Residues Tyr96 and 103–106 (GSDR) each bind substrate. Asp105 serves as the catalytic Proton acceptor. Thr129 contributes to the ATP binding site. Thr189 provides a ligand contact to substrate.

Belongs to the type III pantothenate kinase family. Homodimer. NH4(+) serves as cofactor. Requires K(+) as cofactor.

Its subcellular location is the cytoplasm. The enzyme catalyses (R)-pantothenate + ATP = (R)-4'-phosphopantothenate + ADP + H(+). The protein operates within cofactor biosynthesis; coenzyme A biosynthesis; CoA from (R)-pantothenate: step 1/5. Its function is as follows. Catalyzes the phosphorylation of pantothenate (Pan), the first step in CoA biosynthesis. This chain is Type III pantothenate kinase, found in Burkholderia vietnamiensis (strain G4 / LMG 22486) (Burkholderia cepacia (strain R1808)).